The sequence spans 257 residues: Beta-fibrinogenase mucrofibrase-1 (257 aa).

An N-terminal signal peptide occupies residues 1–18 (MVLIRVLANLLILQLSYA). Positions 19 to 24 (QKSSEL) are excised as a propeptide. The Peptidase S1 domain maps to 25–248 (VIGGDECNIN…HLDWIKGIIA (224 aa)). Disulfide bonds link C31–C162, C49–C65, C97–C255, C141–C209, C173–C188, and C199–C224. Residues H64 and D109 each act as charge relay system in the active site. Residue S203 is the Charge relay system of the active site.

This sequence belongs to the peptidase S1 family. Snake venom subfamily. Monomer. In terms of tissue distribution, expressed by the venom gland.

It is found in the secreted. Its function is as follows. Snake venom serine protease with strong beta-fibrinogenolytic activities, angiotensin I (AGT)-degrading activities and strong kallikrein-like activities in vitro, releasing bradykinin from kininogen (KNG1). Intravenous injection strongly lowers blood pressure in experimental rats, which may be explained by the action on angiotensin I and kininogen. This Protobothrops mucrosquamatus (Taiwan habu) protein is Beta-fibrinogenase mucrofibrase-1.